A 470-amino-acid chain; its full sequence is ATP synthase subunit beta (470 aa).

Residue 157–164 (GGAGVGKT) participates in ATP binding.

It belongs to the ATPase alpha/beta chains family. As to quaternary structure, F-type ATPases have 2 components, CF(1) - the catalytic core - and CF(0) - the membrane proton channel. CF(1) has five subunits: alpha(3), beta(3), gamma(1), delta(1), epsilon(1). CF(0) has three main subunits: a(1), b(2) and c(9-12). The alpha and beta chains form an alternating ring which encloses part of the gamma chain. CF(1) is attached to CF(0) by a central stalk formed by the gamma and epsilon chains, while a peripheral stalk is formed by the delta and b chains.

It localises to the cell inner membrane. The enzyme catalyses ATP + H2O + 4 H(+)(in) = ADP + phosphate + 5 H(+)(out). Its function is as follows. Produces ATP from ADP in the presence of a proton gradient across the membrane. The catalytic sites are hosted primarily by the beta subunits. The chain is ATP synthase subunit beta from Geobacter sulfurreducens (strain ATCC 51573 / DSM 12127 / PCA).